Reading from the N-terminus, the 330-residue chain is Free fatty acid receptor 2 (330 aa).

Residues M1–S8 are Extracellular-facing. A helical transmembrane segment spans residues L9–L29. The Cytoplasmic portion of the chain corresponds to R30 to P43. Residues V44–F64 form a helical membrane-spanning segment. Residues R65 to K79 are Extracellular-facing. A helical transmembrane segment spans residues I80–L100. At A101 to G126 the chain is on the cytoplasmic side. A helical transmembrane segment spans residues V127–V147. The Extracellular segment spans residues Q148–C184. N-linked (GlcNAc...) asparagine glycans are attached at residues N151 and N167. A helical membrane pass occupies residues L185 to I205. At M206–R219 the chain is on the cytoplasmic side. The chain crosses the membrane as a helical span at residues A220–M240. The Extracellular segment spans residues S241–R255. Residues V256 to S276 traverse the membrane as a helical segment. The Cytoplasmic segment spans residues S277–E330. The disordered stretch occupies residues T306 to E330. Over residues E320–E330 the composition is skewed to polar residues.

Belongs to the G-protein coupled receptor 1 family. In terms of assembly, interacts with FCN1 (via Fibrinogen C-terminal domain). Highly expressed in hematopoietic tissues, such as spleen and bone marrow, with highest levels in a subset of immune cells, including monocytes or neutrophils. Expressed in adipose tissues with high expression in differentiating adipocytes. Expressed by intestinal endocrine cells.

It is found in the cell membrane. G protein-coupled receptor that is activated by a major product of dietary fiber digestion, the short chain fatty acids (SCFAs), and that plays a role in the regulation of whole-body energy homeostasis and in intestinal immunity. In omnivorous mammals, the short chain fatty acids acetate, propionate and butyrate are produced primarily by the gut microbiome that metabolizes dietary fibers. SCFAs serve as a source of energy but also act as signaling molecules. That G protein-coupled receptor is probably coupled to the pertussis toxin-sensitive, G(i/o)-alpha family of G proteins but also to the Gq family. Its activation results in the formation of inositol 1,4,5-trisphosphate, the mobilization of intracellular calcium, the phosphorylation of the MAPK3/ERK1 and MAPK1/ERK2 kinases and the inhibition of intracellular cAMP accumulation. May play a role in glucose homeostasis by regulating the secretion of GLP-1, in response to short-chain fatty acids accumulating in the intestine. May also regulate the production of LEP/Leptin, a hormone acting on the central nervous system to inhibit food intake. Finally, may also regulate whole-body energy homeostasis through adipogenesis regulating both differentiation and lipid storage of adipocytes. In parallel to its role in energy homeostasis, may also mediate the activation of the inflammatory and immune responses by SCFA in the intestine, regulating the rapid production of chemokines and cytokines. May also play a role in the resolution of the inflammatory response and control chemotaxis in neutrophils. In addition to SCFAs, may also be activated by the extracellular lectin FCN1 in a process leading to activation of monocytes and inducing the secretion of interleukin-8/IL-8 in response to the presence of microbes. This Mus musculus (Mouse) protein is Free fatty acid receptor 2 (Ffar2).